Reading from the N-terminus, the 334-residue chain is Zinc-finger homeodomain protein 10 (334 aa).

Over residues 1–15 (MMDMTPTITTTTTPT) the composition is skewed to low complexity. Disordered stretches follow at residues 1–33 (MMDM…QPAK) and 103–164 (FHRR…LLSL). Residues 56-107 (YKECLKNHAAALGGHALDGCGEFMPSPSSISSDPTSLKCAACGCHRNFHRRD) form a ZF-HD dimerization-type; degenerate zinc finger. The span at 136 to 155 (PPPPPPPPPRSPNSASPPPI) shows a compositional bias: pro residues. Positions 200–263 (RKRFRTKFSQ…NNKNTFNRRD (64 aa)) form a DNA-binding region, homeobox. The disordered stretch occupies residues 292–334 (NGHHGVGGGGELHQSVSSGGGGGGFDSDSGGANGGNVNGSSSS). Residues 309 to 328 (SGGGGGGFDSDSGGANGGNV) show a composition bias toward gly residues.

As to quaternary structure, homo- and heterodimer with other ZFHD proteins. Interacts with MIF1, MIF2 and MIF3; these interactions prevent nuclear localization and DNA-binding to inhibit transcription regulation activity. Binds to ZHD1, ZHD2, ZHD4, ZHD5, ZHD6, ZHD7 and ZHD8. Interacts with KIN10 and KIN11. Mostly expressed in rosettes (e.g. young leaves), flowers (e.g. styles), siliques and inflorescence.

Its subcellular location is the nucleus. Its function is as follows. Putative transcription factor. Probably involved in establishing polarity during leaf development through the gibberellic acid (GA) signaling pathway. The protein is Zinc-finger homeodomain protein 10 (ZHD10) of Arabidopsis thaliana (Mouse-ear cress).